We begin with the raw amino-acid sequence, 566 residues long: Amino acid transporter 6-1 (566 aa).

Helical transmembrane passes span 65–85 (YVLL…FYGW), 137–157 (MTFA…DWLG), 158–178 (PLWT…FLAF), 187–207 (YPAL…TLCI), 216–236 (GLII…PLVL), 250–270 (VSIG…LLFM), 334–354 (FFSI…WATS), 367–387 (DVVS…ILLG), 392–412 (VVGI…TYVF), 423–443 (LSAC…YVYV), and 455–475 (LIGI…PLYE). N-linked (GlcNAc...) asparagine glycosylation is present at Asn476. A helical transmembrane segment spans residues 489–509 (IQIAMTALLCVQYVWIFILGF).

This sequence belongs to the SLC43A transporter (TC 2.A.1.44) family.

The protein localises to the cell membrane. It carries out the reaction L-lysine(in) = L-lysine(out). The catalysed reaction is L-arginine(in) = L-arginine(out). It catalyses the reaction L-methionine(in) = L-methionine(out). The enzyme catalyses L-leucine(in) = L-leucine(out). Its function is as follows. Cationic and neutral amino acid transporter. Transports lysine with high affinity. Can transport arginine, methionine and leucine. Does not require inorganic ions, such as sodium, chloride, potassium, calcium or magnesium, for transport activity. This is Amino acid transporter 6-1 from Toxoplasma gondii (strain ATCC 50611 / Me49).